The sequence spans 155 residues: Ribonuclease H (155 aa).

The RNase H type-1 domain occupies methionine 1–methionine 142. Mg(2+) is bound by residues aspartate 10, glutamate 48, aspartate 70, and aspartate 134.

It belongs to the RNase H family. As to quaternary structure, monomer. Mg(2+) serves as cofactor.

It is found in the cytoplasm. The enzyme catalyses Endonucleolytic cleavage to 5'-phosphomonoester.. Its function is as follows. Endonuclease that specifically degrades the RNA of RNA-DNA hybrids. The polypeptide is Ribonuclease H (Salmonella paratyphi A (strain AKU_12601)).